A 253-amino-acid chain; its full sequence is Phosphate import ATP-binding protein PstB (253 aa).

One can recognise an ABC transporter domain in the interval 5 to 248 (IETINLHVYY…PEHELTEKYV (244 aa)). ATP is bound at residue 37–44 (GPSGCGKS).

It belongs to the ABC transporter superfamily. Phosphate importer (TC 3.A.1.7) family. As to quaternary structure, the complex is composed of two ATP-binding proteins (PstB), two transmembrane proteins (PstC and PstA) and a solute-binding protein (PstS).

It is found in the cell membrane. The catalysed reaction is phosphate(out) + ATP + H2O = ADP + 2 phosphate(in) + H(+). Functionally, part of the ABC transporter complex PstSACB involved in phosphate import. Responsible for energy coupling to the transport system. The protein is Phosphate import ATP-binding protein PstB of Pyrococcus furiosus (strain ATCC 43587 / DSM 3638 / JCM 8422 / Vc1).